The chain runs to 119 residues: Ribonuclease (119 aa).

Lysine 6 and arginine 9 together coordinate substrate. Residue histidine 11 is the Proton acceptor of the active site. Disulfide bonds link cysteine 26–cysteine 81, cysteine 40–cysteine 92, and cysteine 58–cysteine 107. Residues 41–45 (KFTNT) and arginine 82 contribute to the substrate site. The Proton donor role is filled by histidine 114.

This sequence belongs to the pancreatic ribonuclease family. In terms of assembly, monomer. Interacts with and forms tight 1:1 complexes with RNH1. Dimerization of two such complexes may occur. Interaction with RNH1 inhibits this protein.

It is found in the secreted. The enzyme catalyses an [RNA] containing cytidine + H2O = an [RNA]-3'-cytidine-3'-phosphate + a 5'-hydroxy-ribonucleotide-3'-[RNA].. It carries out the reaction an [RNA] containing uridine + H2O = an [RNA]-3'-uridine-3'-phosphate + a 5'-hydroxy-ribonucleotide-3'-[RNA].. Its function is as follows. Endonuclease that catalyzes the cleavage of RNA on the 3' side of pyrimidine nucleotides. Acts on single-stranded and double-stranded RNA. The sequence is that of Ribonuclease from Chelonia mydas (Green sea-turtle).